A 380-amino-acid polypeptide reads, in one-letter code: Cytochrome b (380 aa).

Transmembrane regions (helical) follow at residues 33–53 (FGSL…FLAM), 77–98 (WLIR…FIHV), 113–133 (WNIG…GYVL), and 178–198 (FFAF…VHLL). The heme b site is built by His83 and His97. Heme b is bound by residues His182 and His196. Position 201 (His201) interacts with a ubiquinone. A run of 4 helical transmembrane segments spans residues 226 to 246 (IKDL…VLFF), 288 to 308 (LGGV…PFLN), 320 to 340 (ITQF…WIGG), and 347 to 367 (FTTI…VLMP).

The protein belongs to the cytochrome b family. As to quaternary structure, the cytochrome bc1 complex contains 11 subunits: 3 respiratory subunits (MT-CYB, CYC1 and UQCRFS1), 2 core proteins (UQCRC1 and UQCRC2) and 6 low-molecular weight proteins (UQCRH/QCR6, UQCRB/QCR7, UQCRQ/QCR8, UQCR10/QCR9, UQCR11/QCR10 and a cleavage product of UQCRFS1). This cytochrome bc1 complex then forms a dimer. The cofactor is heme b.

The protein localises to the mitochondrion inner membrane. Component of the ubiquinol-cytochrome c reductase complex (complex III or cytochrome b-c1 complex) that is part of the mitochondrial respiratory chain. The b-c1 complex mediates electron transfer from ubiquinol to cytochrome c. Contributes to the generation of a proton gradient across the mitochondrial membrane that is then used for ATP synthesis. The chain is Cytochrome b (MT-CYB) from Thomasomys ischyrus (Strong-tailed oldfield mouse).